The chain runs to 513 residues: ATP synthase subunit alpha (513 aa).

Residue G169 to T176 participates in ATP binding.

Belongs to the ATPase alpha/beta chains family. In terms of assembly, F-type ATPases have 2 components, CF(1) - the catalytic core - and CF(0) - the membrane proton channel. CF(1) has five subunits: alpha(3), beta(3), gamma(1), delta(1), epsilon(1). CF(0) has three main subunits: a(1), b(2) and c(9-12). The alpha and beta chains form an alternating ring which encloses part of the gamma chain. CF(1) is attached to CF(0) by a central stalk formed by the gamma and epsilon chains, while a peripheral stalk is formed by the delta and b chains.

It localises to the cell inner membrane. The enzyme catalyses ATP + H2O + 4 H(+)(in) = ADP + phosphate + 5 H(+)(out). Its function is as follows. Produces ATP from ADP in the presence of a proton gradient across the membrane. The alpha chain is a regulatory subunit. In Idiomarina loihiensis (strain ATCC BAA-735 / DSM 15497 / L2-TR), this protein is ATP synthase subunit alpha.